The sequence spans 124 residues: Small ribosomal subunit protein bS6 (124 aa).

This sequence belongs to the bacterial ribosomal protein bS6 family.

Binds together with bS18 to 16S ribosomal RNA. This is Small ribosomal subunit protein bS6 from Campylobacter lari (strain RM2100 / D67 / ATCC BAA-1060).